The primary structure comprises 890 residues: Protein translocase subunit SecA (890 aa).

Residues glutamine 85, 103–107 (GEGKT), and aspartate 491 contribute to the ATP site.

The protein belongs to the SecA family. In terms of assembly, monomer and homodimer. Part of the essential Sec protein translocation apparatus which comprises SecA, SecYEG and auxiliary proteins SecDF. Other proteins may also be involved.

The protein localises to the cell membrane. It localises to the cytoplasm. The catalysed reaction is ATP + H2O + cellular proteinSide 1 = ADP + phosphate + cellular proteinSide 2.. In terms of biological role, part of the Sec protein translocase complex. Interacts with the SecYEG preprotein conducting channel. Has a central role in coupling the hydrolysis of ATP to the transfer of proteins into and across the cell membrane, serving as an ATP-driven molecular motor driving the stepwise translocation of polypeptide chains across the membrane. In Mycoplasmoides gallisepticum (strain R(low / passage 15 / clone 2)) (Mycoplasma gallisepticum), this protein is Protein translocase subunit SecA.